We begin with the raw amino-acid sequence, 307 residues long: Thiamine-monophosphate kinase (307 aa).

Positions 26, 37, 38, and 39 each coordinate Mg(2+). Position 46 (H46) interacts with substrate. Residues D68 and D117 each contribute to the Mg(2+) site. ATP is bound by residues 116–117 (GD) and R140. Residue D207 coordinates Mg(2+). T209 is a binding site for ATP. D210 is a Mg(2+) binding site. E254 and F304 together coordinate substrate.

Belongs to the thiamine-monophosphate kinase family.

The enzyme catalyses thiamine phosphate + ATP = thiamine diphosphate + ADP. The protein operates within cofactor biosynthesis; thiamine diphosphate biosynthesis; thiamine diphosphate from thiamine phosphate: step 1/1. In terms of biological role, catalyzes the ATP-dependent phosphorylation of thiamine-monophosphate (TMP) to form thiamine-pyrophosphate (TPP), the active form of vitamin B1. In Leptospira interrogans serogroup Icterohaemorrhagiae serovar Lai (strain 56601), this protein is Thiamine-monophosphate kinase.